The primary structure comprises 103 residues: Large ribosomal subunit protein bL21 (103 aa).

The protein belongs to the bacterial ribosomal protein bL21 family. In terms of assembly, part of the 50S ribosomal subunit. Contacts protein L20.

In terms of biological role, this protein binds to 23S rRNA in the presence of protein L20. The sequence is that of Large ribosomal subunit protein bL21 from Shewanella denitrificans (strain OS217 / ATCC BAA-1090 / DSM 15013).